Here is a 491-residue protein sequence, read N- to C-terminus: Chromosomal replication initiator protein DnaA (491 aa).

The tract at residues 1 to 69 is domain I, interacts with DnaA modulators; the sequence is MTTWDKCLKK…TIQECHGNDL (69 aa). Residues 69-154 are domain II; that stretch reads LIIEYSNKKF…KEDEEYSFGL (86 aa). The interval 155–371 is domain III, AAA+ region; that stretch reads PLKEKYVFDS…GALNRVLTTS (217 aa). 4 residues coordinate ATP: Gly199, Gly201, Lys202, and Thr203. The interval 372-491 is domain IV, binds dsDNA; sequence KFNHKDPTIE…YELLLNKISR (120 aa).

Belongs to the DnaA family. Oligomerizes as a right-handed, spiral filament on DNA at oriC.

It is found in the cytoplasm. Its function is as follows. Plays an essential role in the initiation and regulation of chromosomal replication. ATP-DnaA binds to the origin of replication (oriC) to initiate formation of the DNA replication initiation complex once per cell cycle. Binds the DnaA box (a 9 base pair repeat at the origin) and separates the double-stranded (ds)DNA. Forms a right-handed helical filament on oriC DNA; dsDNA binds to the exterior of the filament while single-stranded (ss)DNA is stabiized in the filament's interior. The ATP-DnaA-oriC complex binds and stabilizes one strand of the AT-rich DNA unwinding element (DUE), permitting loading of DNA polymerase. After initiation quickly degrades to an ADP-DnaA complex that is not apt for DNA replication. Binds acidic phospholipids. The polypeptide is Chromosomal replication initiator protein DnaA (Francisella tularensis subsp. tularensis (strain WY96-3418)).